The sequence spans 96 residues: Large ribosomal subunit protein eL21 (96 aa).

This sequence belongs to the eukaryotic ribosomal protein eL21 family.

The protein is Large ribosomal subunit protein eL21 of Methanoregula boonei (strain DSM 21154 / JCM 14090 / 6A8).